The primary structure comprises 541 residues: Peptidyl-alpha-hydroxyglycine alpha-amidating lyase 1 (541 aa).

An N-terminal signal peptide occupies residues 1-33; the sequence is MKSTDSAKCLGSKSLAICCLLLHLLLCIRPAVS. At 34–458 the chain is on the extracellular side; the sequence is QTQSPQRYLH…VAVHHPSGKA (425 aa). N-linked (GlcNAc...) asparagine glycosylation occurs at Asn92. NHL repeat units follow at residues 164 to 205, 215 to 258, and 272 to 314; these read GKVQ…FPPR, LGDA…YSRK, and GISY…FLSS. 2 cysteine pairs are disulfide-bonded: Cys228–Cys248 and Cys299–Cys310. An N-linked (GlcNAc...) asparagine glycan is attached at Asn315. The NHL 4 repeat unit spans residues 374 to 418; sequence KQLVSKFGPNNLQFQNPHDVAVTADGNEIYVAELNPMRIHKFVHR. The helical transmembrane segment at 459-479 threads the bilayer; that stretch reads ILVASLMLLFAGSTFALALIF. The Cytoplasmic segment spans residues 480–541; it reads ARRRKRGCLP…TKTLASAQYA (62 aa). The interval 521–541 is disordered; that stretch reads LDQQASDEEQETKTLASAQYA.

The protein belongs to the peptidyl-alpha-hydroxyglycine alpha-amidating lyase family. It depends on Zn(2+) as a cofactor. Post-translationally, N-glycosylated. As to expression, widely expressed. In mature larvae, it is ubiquitously expressed with a low expression in all cells and a stronger expression in a subset of neurons. Colocalizes with neuropeptide proctolin. In adults, weak expression is observed in most neuronal cell bodies and in scattered large cells throughout the protocerebrum and also in the subesophageal neuromeres (at protein level).

It is found in the cell membrane. The enzyme catalyses a [peptide]-C-terminal (2S)-2-hydroxyglycine = a [peptide]-C-terminal amide + glyoxylate. In terms of biological role, peptidyl-alpha-hydroxylglycine alpha-amidating lyase that catalyzes an essential reaction in C-terminal alpha-amidation of peptides. Mediates the dismutation of the unstable peptidyl(2-hydroxyglycine) intermediate to glyoxylate and the corresponding desglycine peptide amide. C-terminal amidation of peptides such as neuropeptides is essential for full biological activity. The chain is Peptidyl-alpha-hydroxyglycine alpha-amidating lyase 1 (Pal1) from Drosophila melanogaster (Fruit fly).